A 363-amino-acid polypeptide reads, in one-letter code: Histidine biosynthesis bifunctional protein HisB (363 aa).

Residues 1-174 (MTQPTLFIDR…AVTNIGDRQP (174 aa)) are histidinol-phosphatase. D9 serves as the catalytic Nucleophile. Mg(2+) is bound by residues D9 and D11. D11 acts as the Proton donor in catalysis. 4 residues coordinate Zn(2+): C92, H94, C100, and C102. Mg(2+) is bound at residue D129. Residues 175 to 363 (RYAEVVRKTK…NELPSSKGVL (189 aa)) are imidazoleglycerol-phosphate dehydratase.

It in the N-terminal section; belongs to the histidinol-phosphatase family. This sequence in the C-terminal section; belongs to the imidazoleglycerol-phosphate dehydratase family. Requires Mg(2+) as cofactor. Zn(2+) serves as cofactor.

The protein resides in the cytoplasm. It carries out the reaction D-erythro-1-(imidazol-4-yl)glycerol 3-phosphate = 3-(imidazol-4-yl)-2-oxopropyl phosphate + H2O. The enzyme catalyses L-histidinol phosphate + H2O = L-histidinol + phosphate. It functions in the pathway amino-acid biosynthesis; L-histidine biosynthesis; L-histidine from 5-phospho-alpha-D-ribose 1-diphosphate: step 6/9. It participates in amino-acid biosynthesis; L-histidine biosynthesis; L-histidine from 5-phospho-alpha-D-ribose 1-diphosphate: step 8/9. This Actinobacillus pleuropneumoniae serotype 5b (strain L20) protein is Histidine biosynthesis bifunctional protein HisB.